A 320-amino-acid chain; its full sequence is Ciliary microtubule inner protein 2A (320 aa).

This sequence belongs to the CIMIP2 family. Microtubule inner protein component of sperm flagellar doublet microtubules. In terms of tissue distribution, expressed in sperm.

Its subcellular location is the cytoplasm. It localises to the cytoskeleton. It is found in the flagellum axoneme. Microtubule inner protein (MIP) part of the dynein-decorated doublet microtubules (DMTs) in flagellum axoneme. Binds to the intra-tubulin interfaces. The sequence is that of Ciliary microtubule inner protein 2A (CIMIP2A) from Bos taurus (Bovine).